Consider the following 134-residue polypeptide: MGRDTILEIINSIRNADRGRKRVVRITSTNITENFVKILFIEGFIENARKHREKNKYYFTLTLRHRRNSKRPYINILNLKRISRPGLRIYSNSQQIPLILGGIGIVILYTSRGIMTDREARLKGIGGELLCYIW.

The protein belongs to the universal ribosomal protein uS8 family. As to quaternary structure, part of the 30S ribosomal subunit.

It localises to the plastid. Functionally, one of the primary rRNA binding proteins, it binds directly to 16S rRNA central domain where it helps coordinate assembly of the platform of the 30S subunit. This Epifagus virginiana (Beechdrops) protein is Small ribosomal subunit protein uS8c (rps8).